We begin with the raw amino-acid sequence, 129 residues long: Small ribosomal subunit protein uS11 (129 aa).

It belongs to the universal ribosomal protein uS11 family. As to quaternary structure, part of the 30S ribosomal subunit. Interacts with proteins S7 and S18. Binds to IF-3.

Its function is as follows. Located on the platform of the 30S subunit, it bridges several disparate RNA helices of the 16S rRNA. Forms part of the Shine-Dalgarno cleft in the 70S ribosome. The chain is Small ribosomal subunit protein uS11 from Mesorhizobium japonicum (strain LMG 29417 / CECT 9101 / MAFF 303099) (Mesorhizobium loti (strain MAFF 303099)).